The chain runs to 513 residues: Histidine ammonia-lyase (513 aa).

The segment at residues 146 to 148 (ASG) is a cross-link (5-imidazolinone (Ala-Gly)). A 2,3-didehydroalanine (Ser) modification is found at serine 147.

This sequence belongs to the PAL/histidase family. In terms of processing, contains an active site 4-methylidene-imidazol-5-one (MIO), which is formed autocatalytically by cyclization and dehydration of residues Ala-Ser-Gly.

Its subcellular location is the cytoplasm. The enzyme catalyses L-histidine = trans-urocanate + NH4(+). It participates in amino-acid degradation; L-histidine degradation into L-glutamate; N-formimidoyl-L-glutamate from L-histidine: step 1/3. The chain is Histidine ammonia-lyase from Shewanella oneidensis (strain ATCC 700550 / JCM 31522 / CIP 106686 / LMG 19005 / NCIMB 14063 / MR-1).